A 371-amino-acid polypeptide reads, in one-letter code: Peptide chain release factor 2 (371 aa).

At Gln-253 the chain carries N5-methylglutamine.

It belongs to the prokaryotic/mitochondrial release factor family. Post-translationally, methylated by PrmC. Methylation increases the termination efficiency of RF2.

It is found in the cytoplasm. Functionally, peptide chain release factor 2 directs the termination of translation in response to the peptide chain termination codons UGA and UAA. The polypeptide is Peptide chain release factor 2 (Mycobacterium sp. (strain KMS)).